The chain runs to 274 residues: Large ribosomal subunit protein uL2 (274 aa).

A disordered region spans residues valine 223–threonine 264.

This sequence belongs to the universal ribosomal protein uL2 family. Part of the 50S ribosomal subunit. Forms a bridge to the 30S subunit in the 70S ribosome.

Functionally, one of the primary rRNA binding proteins. Required for association of the 30S and 50S subunits to form the 70S ribosome, for tRNA binding and peptide bond formation. It has been suggested to have peptidyltransferase activity; this is somewhat controversial. Makes several contacts with the 16S rRNA in the 70S ribosome. This Shewanella denitrificans (strain OS217 / ATCC BAA-1090 / DSM 15013) protein is Large ribosomal subunit protein uL2.